The following is a 272-amino-acid chain: Rhomboid-type serine protease B (272 aa).

Helical transmembrane passes span 30-50 (LVLL…WSVV), 72-92 (PFIH…TPLL), 103-123 (TAVA…YILV), 133-153 (AVVG…IKTF), 164-184 (TKIP…IFVP), and 186-206 (TSFL…LGYL). The Nucleophile role is filled by serine 138. Histidine 191 is a catalytic residue.

The protein belongs to the peptidase S54 family.

Its subcellular location is the membrane. It carries out the reaction Cleaves type-1 transmembrane domains using a catalytic dyad composed of serine and histidine that are contributed by different transmembrane domains.. In terms of biological role, rhomboid protease that catalyzes intramembrane proteolysis. Required for transcription factor srbA activation by mediating its release from the membrane and thereby regulating its activity under hypoxic conditions. Essential for iron homeostasis and resistance to azoles such as voriconazole. Required for virulence in murine models of invasive pulmonary aspergillosis (IPA). The protein is Rhomboid-type serine protease B of Aspergillus fumigatus (strain ATCC MYA-4609 / CBS 101355 / FGSC A1100 / Af293) (Neosartorya fumigata).